A 238-amino-acid polypeptide reads, in one-letter code: Fmr1 neighbor protein (238 aa).

A disordered region spans residues 1–30 (MPSDRRPSQRRNRSKSRDYRGARSKVTRAD). At 1 to 79 (MPSDRRPSQR…CLQYLWARRH (79 aa)) the chain is on the cytoplasmic side. The span at 15-30 (KSRDYRGARSKVTRAD) shows a compositional bias: basic and acidic residues. A helical membrane pass occupies residues 80 to 100 (LGLLLLLFWTLVILFRPVNTA). Over 101 to 178 (KLPILAEAAE…VRDKPTQVLR (78 aa)) the chain is Extracellular. One can recognise a P-type domain in the interval 118–176 (MLDFFFPTACIIRDNQVVVACNNQPYLSESECLKSKCCSSTSGTIIKCYAPVRDKPTQV). The chain crosses the membrane as a helical span at residues 179 to 199 (VFGLAAISILVLGFLPMCCCS). The Cytoplasmic segment spans residues 200 to 238 (MCWRRKRMNRMLKVLKKQKSKGKKPKGRKASEERALLSH). Residues 214–227 (LKKQKSKGKKPKGR) show a composition bias toward basic residues. Residues 214 to 238 (LKKQKSKGKKPKGRKASEERALLSH) are disordered. Residues 228–238 (KASEERALLSH) show a composition bias toward basic and acidic residues.

It localises to the membrane. The sequence is that of Fmr1 neighbor protein from Mus musculus (Mouse).